The following is an 85-amino-acid chain: Large ribosomal subunit protein bL31 (85 aa).

Positions 65 to 85 are disordered; sequence YGMGGAGKAGEDKKAGDKADA. The segment covering 73 to 85 has biased composition (basic and acidic residues); it reads AGEDKKAGDKADA.

This sequence belongs to the bacterial ribosomal protein bL31 family. Type A subfamily. In terms of assembly, part of the 50S ribosomal subunit.

In terms of biological role, binds the 23S rRNA. The protein is Large ribosomal subunit protein bL31 of Synechococcus sp. (strain WH7803).